Here is a 569-residue protein sequence, read N- to C-terminus: Proline--tRNA ligase (569 aa).

Belongs to the class-II aminoacyl-tRNA synthetase family. ProS type 1 subfamily. As to quaternary structure, homodimer.

It is found in the cytoplasm. The catalysed reaction is tRNA(Pro) + L-proline + ATP = L-prolyl-tRNA(Pro) + AMP + diphosphate. Catalyzes the attachment of proline to tRNA(Pro) in a two-step reaction: proline is first activated by ATP to form Pro-AMP and then transferred to the acceptor end of tRNA(Pro). As ProRS can inadvertently accommodate and process non-cognate amino acids such as alanine and cysteine, to avoid such errors it has two additional distinct editing activities against alanine. One activity is designated as 'pretransfer' editing and involves the tRNA(Pro)-independent hydrolysis of activated Ala-AMP. The other activity is designated 'posttransfer' editing and involves deacylation of mischarged Ala-tRNA(Pro). The misacylated Cys-tRNA(Pro) is not edited by ProRS. In Levilactobacillus brevis (strain ATCC 367 / BCRC 12310 / CIP 105137 / JCM 1170 / LMG 11437 / NCIMB 947 / NCTC 947) (Lactobacillus brevis), this protein is Proline--tRNA ligase.